Consider the following 250-residue polypeptide: MAKNYPVVSAEYQEAVEKARQKLRALIAEKSCAPLMLRLAWHSAGTFDVSSKTGGPFGTMKTPAELSHAANAGLDIAVRMLEPIKEEIPTISYADFYQLAGVVAVEVSGGPAVPFHPGREDKPAPPPEGRLPDATKGSDHLRQVFGAQMGLSDQDIVALSGGHTLGRCHKERSGFEGPWTRNPLQFDNSYFTELLSGDKEGLLQLPSDKALLSDPAFCPLVEKYAADEKAFFEDYKEAHLKLSELGFADA.

The Proton acceptor role is filled by histidine 42. The interval 113-137 (VPFHPGREDKPAPPPEGRLPDATKG) is disordered. Histidine 163 is a binding site for heme b. Threonine 164, threonine 180, asparagine 182, and aspartate 187 together coordinate K(+).

The protein belongs to the peroxidase family. Ascorbate peroxidase subfamily. It depends on heme b as a cofactor.

Its subcellular location is the cytoplasm. It catalyses the reaction L-ascorbate + H2O2 = L-dehydroascorbate + 2 H2O. Plays a key role in hydrogen peroxide removal. This is L-ascorbate peroxidase 1, cytosolic (APX1) from Oryza sativa subsp. indica (Rice).